Here is a 360-residue protein sequence, read N- to C-terminus: MKSSIRQKLELLVDRLDEIDRMLSAPSTASDMDQFRKLSRERAEVEPVVVQFNAFRQAENDLAEAEAMLSDPDMREFAEEEMAAAKARLPELELELQKLLLPKDPNDERSVLLEIRAGTGGDESALFAGSLFRMYSRFAERQRWQVEVMSASESELGGYREIICRIAGNGAYSRLKFESGGHRVQRVPETETQGRIHTSACTVAVMPEVDEVEDVNLNPADLRIDTFRASGAGGQHINKTDSAVRITHLPTGIVAECQDGRSQHANKASALKVLAARIKDVQVRAQQAHISSTRKSLIGSGDRSERIRTYNFPQGRITDHRINLTLYKIAAIMDGDMDELLGALAAEHQADLLAELAEQN.

Gln-235 carries the N5-methylglutamine modification.

Belongs to the prokaryotic/mitochondrial release factor family. Methylated by PrmC. Methylation increases the termination efficiency of RF1.

The protein localises to the cytoplasm. Its function is as follows. Peptide chain release factor 1 directs the termination of translation in response to the peptide chain termination codons UAG and UAA. This Dechloromonas aromatica (strain RCB) protein is Peptide chain release factor 1.